A 415-amino-acid polypeptide reads, in one-letter code: Adenosylhomocysteinase (415 aa).

Substrate-binding residues include Thr-53, Asp-124, and Glu-147. 148 to 150 serves as a coordination point for NAD(+); it reads TTT. Residues Lys-177 and Asp-181 each coordinate substrate. Residues Asn-182, 211-216, Glu-234, Asn-269, 290-292, and Asn-337 contribute to the NAD(+) site; these read GYGWVG and SGH.

Belongs to the adenosylhomocysteinase family. It depends on NAD(+) as a cofactor.

The protein localises to the cytoplasm. The enzyme catalyses S-adenosyl-L-homocysteine + H2O = L-homocysteine + adenosine. The protein operates within amino-acid biosynthesis; L-homocysteine biosynthesis; L-homocysteine from S-adenosyl-L-homocysteine: step 1/1. Functionally, may play a key role in the regulation of the intracellular concentration of adenosylhomocysteine. This Sulfolobus acidocaldarius (strain ATCC 33909 / DSM 639 / JCM 8929 / NBRC 15157 / NCIMB 11770) protein is Adenosylhomocysteinase.